Reading from the N-terminus, the 118-residue chain is Beta-2-microglobulin (118 aa).

The signal sequence occupies residues 1 to 20; that stretch reads MARFVALVLLGLLSLSGLDA. The Ig-like C1-type domain maps to 25–112; the sequence is PKIQVYSRHP…HVTLEQPRIV (88 aa). A disulfide bond links C45 and C99.

The protein belongs to the beta-2-microglobulin family. As to quaternary structure, heterodimer of an alpha chain and a beta chain. Beta-2-microglobulin is the beta-chain of major histocompatibility complex class I molecules. Forms a heterotrimer with MR1 and a metabolite antigen.

The protein resides in the secreted. Its function is as follows. Component of the class I major histocompatibility complex (MHC). Involved in the presentation of peptide antigens to the immune system. This Bos taurus (Bovine) protein is Beta-2-microglobulin (B2M).